The chain runs to 628 residues: Glutamine--fructose-6-phosphate aminotransferase [isomerizing] (628 aa).

Cys2 functions as the Nucleophile; for GATase activity in the catalytic mechanism. The Glutamine amidotransferase type-2 domain occupies 2 to 229 (CGIVGYVGHR…QDQAVVLTAD (228 aa)). The tract at residues 61-94 (ETDSNDGDGLGGSTGLGHTRWATHGRPTDRNAHP) is disordered. 2 consecutive SIS domains span residues 301–440 (SDQE…ARGT) and 473–618 (LAER…VDKP). Lys623 (for Fru-6P isomerization activity) is an active-site residue.

In terms of assembly, homodimer.

The protein localises to the cytoplasm. The enzyme catalyses D-fructose 6-phosphate + L-glutamine = D-glucosamine 6-phosphate + L-glutamate. In terms of biological role, catalyzes the first step in hexosamine metabolism, converting fructose-6P into glucosamine-6P using glutamine as a nitrogen source. This chain is Glutamine--fructose-6-phosphate aminotransferase [isomerizing], found in Mycolicibacterium smegmatis (strain ATCC 700084 / mc(2)155) (Mycobacterium smegmatis).